We begin with the raw amino-acid sequence, 173 residues long: Co-chaperone protein HscB homolog (173 aa).

One can recognise a J domain in the interval 5–77 (CHFALFDLQP…SQRARYLLAL (73 aa)).

This sequence belongs to the HscB family. As to quaternary structure, interacts with HscA and stimulates its ATPase activity.

In terms of biological role, co-chaperone involved in the maturation of iron-sulfur cluster-containing proteins. Seems to help targeting proteins to be folded toward HscA. This chain is Co-chaperone protein HscB homolog, found in Ectopseudomonas mendocina (strain ymp) (Pseudomonas mendocina).